Consider the following 130-residue polypeptide: UPF0102 protein RSc3265 (130 aa).

This sequence belongs to the UPF0102 family.

This Ralstonia nicotianae (strain ATCC BAA-1114 / GMI1000) (Ralstonia solanacearum) protein is UPF0102 protein RSc3265.